A 236-amino-acid polypeptide reads, in one-letter code: 1-(5-phosphoribosyl)-5-[(5-phosphoribosylamino)methylideneamino] imidazole-4-carboxamide isomerase (236 aa).

Catalysis depends on Asp-8, which acts as the Proton acceptor. Asp-129 functions as the Proton donor in the catalytic mechanism.

This sequence belongs to the HisA/HisF family.

Its subcellular location is the cytoplasm. It catalyses the reaction 1-(5-phospho-beta-D-ribosyl)-5-[(5-phospho-beta-D-ribosylamino)methylideneamino]imidazole-4-carboxamide = 5-[(5-phospho-1-deoxy-D-ribulos-1-ylimino)methylamino]-1-(5-phospho-beta-D-ribosyl)imidazole-4-carboxamide. It functions in the pathway amino-acid biosynthesis; L-histidine biosynthesis; L-histidine from 5-phospho-alpha-D-ribose 1-diphosphate: step 4/9. This chain is 1-(5-phosphoribosyl)-5-[(5-phosphoribosylamino)methylideneamino] imidazole-4-carboxamide isomerase, found in Methanospirillum hungatei JF-1 (strain ATCC 27890 / DSM 864 / NBRC 100397 / JF-1).